The following is an 807-amino-acid chain: Dual specificity protein kinase YAK1 (807 aa).

Residues 1-19 (MNSSNNNDSSSSNSNMNNS) show a composition bias toward low complexity. Residues 1 to 84 (MNSSNNNDSS…QQQQQQQQNS (84 aa)) are disordered. Residues 20 to 31 (LSPTLVTHSDAS) are compositionally biased toward polar residues. S38 is subject to Phosphoserine. The segment covering 55–84 (NQGSQRSPQQQHQNHHQQQQQQQQQQQQNS) has biased composition (low complexity). 3 positions are modified to phosphoserine: S115, S118, and S127. The segment at 124 to 180 (RRKSSLVVPPARAPAPNPFQYDSYPAYTSSNTSLAGNSSGQYPSGYQQQQQQVYQQG) is disordered. A compositionally biased stretch (polar residues) spans 149-160 (AYTSSNTSLAGN). The segment covering 161 to 180 (SSGQYPSGYQQQQQQVYQQG) has biased composition (low complexity). S206 carries the post-translational modification Phosphoserine. The segment covering 214–224 (SNFSSLNSNTN) has biased composition (low complexity). The tract at residues 214 to 254 (SNFSSLNSNTNQGTNSIPVMSPYRRLSAYPPSTSPPLQPPF) is disordered. Phosphoserine is present on residues S240, S245, and S247. T288 bears the Phosphothreonine mark. S295 is modified (phosphoserine). A Protein kinase domain is found at 369–704 (YLVLDILGQG…PQQAMLHPFI (336 aa)). Residues 375-383 (LGQGTFGQV) and K398 contribute to the ATP site. The Proton acceptor role is filled by D496. Y530 bears the Phosphotyrosine mark. Residues 714-758 (FPPGSSLPGPSEKHDDAKGQQSEYGSANDSSNNAGHNYVYNPSSA) are disordered. Residues 732–758 (GQQSEYGSANDSSNNAGHNYVYNPSSA) show a composition bias toward polar residues.

The protein belongs to the protein kinase superfamily. CMGC Ser/Thr protein kinase family. MNB/DYRK subfamily. In terms of processing, phosphorylated; highly.

It is found in the cytoplasm. It localises to the nucleus. The enzyme catalyses L-seryl-[protein] + ATP = O-phospho-L-seryl-[protein] + ADP + H(+). It catalyses the reaction L-threonyl-[protein] + ATP = O-phospho-L-threonyl-[protein] + ADP + H(+). It carries out the reaction L-tyrosyl-[protein] + ATP = O-phospho-L-tyrosyl-[protein] + ADP + H(+). Functionally, negative regulator of the cell cycle acting downstream of the cAMP-dependent protein kinase. Part of a glucose-sensing system involved in growth control in response to glucose availability. Phosphorylates POP2. This Saccharomyces cerevisiae (strain ATCC 204508 / S288c) (Baker's yeast) protein is Dual specificity protein kinase YAK1 (YAK1).